The sequence spans 494 residues: Argininosuccinate lyase (494 aa).

It belongs to the lyase 1 family. Argininosuccinate lyase subfamily.

The protein localises to the cytoplasm. It carries out the reaction 2-(N(omega)-L-arginino)succinate = fumarate + L-arginine. The protein operates within amino-acid biosynthesis; L-arginine biosynthesis; L-arginine from L-ornithine and carbamoyl phosphate: step 3/3. This Methanosphaerula palustris (strain ATCC BAA-1556 / DSM 19958 / E1-9c) protein is Argininosuccinate lyase.